A 771-amino-acid polypeptide reads, in one-letter code: Rho guanine nucleotide exchange factor 6 (771 aa).

One can recognise a Calponin-homology (CH) domain in the interval 1-111 (MNPEERLVTW…TLLAVNKATE (111 aa)). The interval 115–157 (SERPCGRSSSLSAATSSQTNPQVAVPSTAPEQHSEEKAEMTEN) is disordered. Residues 122–131 (SSSLSAATSS) show a composition bias toward low complexity. At Ser-126 the chain carries Phosphoserine. Thr-133 carries the phosphothreonine modification. Residues 159 to 218 (SHQLIVKARFNFKQTNEDELSVCKGDIIYVTRVEEGGWWEGTLNGRTGWFPSNYVREIKP) form the SH3 domain. The residue at position 224 (Ser-224) is a Phosphoserine. The DH domain occupies 240–420 (YYTVVLQNIL…KTLMGQCQDL (181 aa)). Residues 442 to 547 (DIKTLGNVIF…WMEQLNRLTK (106 aa)) enclose the PH domain. Residue Ser-487 is modified to Phosphoserine. Residues 556–572 (SKTSSSSCSTHSSFSST) show a composition bias toward low complexity. The disordered stretch occupies residues 556 to 580 (SKTSSSSCSTHSSFSSTGQPRGPLE). Residues Ser-639 and Ser-679 each carry the phosphoserine modification.

Interacts with PAK kinases through the SH3 domain. Interacts with GIT1. Component of cytoplasmic complexes, which also contain PXN, GIT1 and PAK1. Interacts with BIN2. Identified in a complex with BIN2 and GIT2. Interacts with PARVB. Interacts with PARVG; the guanine nucleotide exchange factor activity of ARHGEF6 is essential for PARVG-induced enhancement of cell spreading. Detected in adult heart, spleen, lung, skeletal muscle, kidney and testis. Detected throughout embryogenesis.

The protein localises to the cell projection. The protein resides in the lamellipodium. Acts as a RAC1 guanine nucleotide exchange factor (GEF). The polypeptide is Rho guanine nucleotide exchange factor 6 (Arhgef6) (Mus musculus (Mouse)).